A 337-amino-acid chain; its full sequence is MSCKSNTLAKNYTNHPLRINEIHLPWKPTIPNTHYEFVRAQVVDLLNELGLCEDKKERDRRDGVIMLASYMYPEAGPQELLFGTMYVLWLFFFDDIFDESKFLKEECNQAAERSLHIFRTGKAPEKNAKLNFSIVQLEDLLLRIFAMANDLAKSSDITARFMKSCEIYFVDGAVPMENFRQMKTLPKLEEYLAVRTIDGGAAACIACFEIVAHLDLSDDIVNEPRVLRMCEIAGQQIAYANDIYSYHREKLHNNSMNSLNIRCQTLSFEDALTEQIAQLNGWVQEFETLKQSLAESALWENSLKMYITGMENIVMGCKVWSESCTRYNLKSLLTVVV.

Mg(2+)-binding residues include aspartate 94 and aspartate 98. The short motif at 94–98 (DDIFD) is the D(D/E)XX(D/E) motif element. Residue arginine 195 coordinates substrate. Mg(2+) is bound by residues asparagine 241, serine 245, and glutamate 249. The NSE motif motif lies at 241–249 (NDIYSYHRE). The WxxxxxRY motif signature appears at 320–327 (WSESCTRY).

It belongs to the terpene synthase family. Mg(2+) serves as cofactor.

It catalyses the reaction (2E,6E)-farnesyl diphosphate = alpha-muurolene + diphosphate. The catalysed reaction is (2E,6E)-farnesyl diphosphate = (-)-(E)-beta-caryophyllene + diphosphate. In terms of biological role, terpene synthase that catalyzes the cyclization of farnesyl diphosphate (FPP) into alpha-muurolene, (-)-beta-caryophyllene, and one unidentified sesquiterpene. TPS4 shows only trace monoterpene synthase activity with geranyl diphosphate (GPP) as substrate and produces very small amounts of myrcene. P.polycephalum has a unique biology and these volatile terpenoids could function in internal communication of P.polycephalum, to mark the territory that have been explored, or they may be involved in chemotaxis. This Physarum polycephalum (Slime mold) protein is Terpene synthase 4.